The chain runs to 946 residues: Serine/threonine-protein kinase PLK4 (946 aa).

Residues 12-265 (FKVLNLLGKG…LSSVLDHAFM (254 aa)) form the Protein kinase domain. Residues 18-26 (LGKGSFACV) and Lys41 each bind ATP. The active-site Proton acceptor is the Asp136. The interval 330 to 395 (HPAERSNGGS…TYGKPSSFSE (66 aa)) is disordered. Positions 378-394 (RSGTSQSQTYGKPSSFS) are enriched in polar residues. Residues 566-679 (TLRSIISPLN…AKFIQLVRSK (114 aa)) enclose the Cryptic POLO box 1 (CPB1) domain. A Cryptic POLO box 2 (CPB2) domain is found at 680–792 (MPKVTYYTRY…GRRPAITESP (113 aa)). The segment at 789 to 828 (TESPRTQLTVDSARERKDEQSSANRVLHSSATSPPQIPNI) is disordered. Over residues 809–828 (SSANRVLHSSATSPPQIPNI) the composition is skewed to polar residues. A POLO box domain is found at 864–942 (QVLKSVFVEN…LSSILMLFAS (79 aa)).

It belongs to the protein kinase superfamily. Ser/Thr protein kinase family. CDC5/Polo subfamily. In terms of assembly, homodimer. Post-translationally, ubiquitinated; leading to its degradation by the proteasome.

It is found in the cytoplasm. The protein resides in the cytoskeleton. Its subcellular location is the microtubule organizing center. It localises to the centrosome. The protein localises to the centriole. It catalyses the reaction L-seryl-[protein] + ATP = O-phospho-L-seryl-[protein] + ADP + H(+). It carries out the reaction L-threonyl-[protein] + ATP = O-phospho-L-threonyl-[protein] + ADP + H(+). Functionally, serine/threonine-protein kinase that plays a central role in centriole duplication. Able to trigger procentriole formation on the surface of the parental centriole cylinder, leading to the recruitment of centriole biogenesis proteins such as sass6, cpap, ccp110, cep135 and gamma-tubulin. When overexpressed, it is able to induce centrosome amplification through the simultaneous generation of multiple procentrioles adjoining each parental centriole during S phase. Its central role in centriole replication suggests a possible role in tumorigenesis, centrosome aberrations being frequently observed in tumors. Also involved in deuterosome-mediated centriole amplification in multiciliated that can generate more than 100 centrioles. The sequence is that of Serine/threonine-protein kinase PLK4 from Xenopus tropicalis (Western clawed frog).